The following is a 441-amino-acid chain: Ribosomal protein uS12 methylthiotransferase RimO (441 aa).

The MTTase N-terminal domain maps to 7–117 (PKISFVSLGC…VLEAVHRALP (111 aa)). C16, C52, C81, C148, C152, and C155 together coordinate [4Fe-4S] cluster. The Radical SAM core domain occupies 134-371 (LTPRHYAYLK…MARQQKISAR (238 aa)). Positions 374 to 440 (KRKVGTRQQV…AYDLHGTVAG (67 aa)) constitute a TRAM domain.

Belongs to the methylthiotransferase family. RimO subfamily. It depends on [4Fe-4S] cluster as a cofactor.

The protein resides in the cytoplasm. The enzyme catalyses L-aspartate(89)-[ribosomal protein uS12]-hydrogen + (sulfur carrier)-SH + AH2 + 2 S-adenosyl-L-methionine = 3-methylsulfanyl-L-aspartate(89)-[ribosomal protein uS12]-hydrogen + (sulfur carrier)-H + 5'-deoxyadenosine + L-methionine + A + S-adenosyl-L-homocysteine + 2 H(+). In terms of biological role, catalyzes the methylthiolation of an aspartic acid residue of ribosomal protein uS12. The sequence is that of Ribosomal protein uS12 methylthiotransferase RimO from Rhodopseudomonas palustris (strain BisA53).